The chain runs to 452 residues: tRNA modification GTPase MnmE (452 aa).

(6S)-5-formyl-5,6,7,8-tetrahydrofolate is bound by residues Arg22, Glu79, and Lys119. A TrmE-type G domain is found at 215–375; that stretch reads GMKVVIAGRP…LRQHLKQSMG (161 aa). Asn225 serves as a coordination point for K(+). GTP is bound by residues 225-230, 244-250, 269-272, and 333-336; these read NAGKSS, TDIAGTT, DTAG, and NKAD. A Mg(2+)-binding site is contributed by Ser229. 3 residues coordinate K(+): Thr244, Ile246, and Thr249. Thr250 serves as a coordination point for Mg(2+). Lys452 is a (6S)-5-formyl-5,6,7,8-tetrahydrofolate binding site.

It belongs to the TRAFAC class TrmE-Era-EngA-EngB-Septin-like GTPase superfamily. TrmE GTPase family. As to quaternary structure, homodimer. Heterotetramer of two MnmE and two MnmG subunits. It depends on K(+) as a cofactor.

The protein localises to the cytoplasm. In terms of biological role, exhibits a very high intrinsic GTPase hydrolysis rate. Involved in the addition of a carboxymethylaminomethyl (cmnm) group at the wobble position (U34) of certain tRNAs, forming tRNA-cmnm(5)s(2)U34. The sequence is that of tRNA modification GTPase MnmE from Histophilus somni (strain 129Pt) (Haemophilus somnus).